The primary structure comprises 526 residues: 3-hydroxy-3-methylglutaryl-coenzyme A reductase 2 (526 aa).

Residues glutamate 193, lysine 325, and aspartate 401 each act as charge relay system in the active site. Residue histidine 499 is the Proton donor of the active site. The tract at residues 503 to 526 (NRKTEAPAPQADTISMTHNLPHSD) is disordered. The span at 514–526 (DTISMTHNLPHSD) shows a compositional bias: polar residues.

This sequence belongs to the HMG-CoA reductase family.

The enzyme catalyses (R)-mevalonate + 2 NADP(+) + CoA = (3S)-3-hydroxy-3-methylglutaryl-CoA + 2 NADPH + 2 H(+). Its pathway is metabolic intermediate biosynthesis; (R)-mevalonate biosynthesis; (R)-mevalonate from acetyl-CoA: step 3/3. This transmembrane glycoprotein is involved in the control of cholesterol biosynthesis. It is the rate-limiting enzyme of the sterol biosynthesis. The sequence is that of 3-hydroxy-3-methylglutaryl-coenzyme A reductase 2 (hmgB) from Dictyostelium discoideum (Social amoeba).